A 207-amino-acid chain; its full sequence is Probable mediator of RNA polymerase II transcription subunit 19b (207 aa).

The tract at residues 99–207 is disordered; sequence DTAPVELPPA…SSKLDEMGAM (109 aa). Residues 127–152 show a composition bias toward basic residues; the sequence is DRKHRKHKDKKEKDREHKKHKHKHKD. Over residues 153 to 167 the composition is skewed to basic and acidic residues; that stretch reads RIKDKDKDKDRDKKK. The segment covering 168-179 has biased composition (basic residues); that stretch reads EKSGHHDKKRKN.

Belongs to the plant Mediator complex subunit 19 family. In terms of assembly, component of the Mediator complex.

It localises to the nucleus. Its function is as follows. Component of the Mediator complex, a coactivator involved in the regulated transcription of nearly all RNA polymerase II-dependent genes. Mediator functions as a bridge to convey information from gene-specific regulatory proteins to the basal RNA polymerase II transcription machinery. The Mediator complex, having a compact conformation in its free form, is recruited to promoters by direct interactions with regulatory proteins and serves for the assembly of a functional preinitiation complex with RNA polymerase II and the general transcription factors. The polypeptide is Probable mediator of RNA polymerase II transcription subunit 19b (MED19B) (Arabidopsis thaliana (Mouse-ear cress)).